We begin with the raw amino-acid sequence, 277 residues long: Orotidine 5'-phosphate decarboxylase (277 aa).

Catalysis depends on lysine 95, which acts as the Proton donor.

This sequence belongs to the OMP decarboxylase family. Type 2 subfamily.

The catalysed reaction is orotidine 5'-phosphate + H(+) = UMP + CO2. Its pathway is pyrimidine metabolism; UMP biosynthesis via de novo pathway; UMP from orotate: step 2/2. The polypeptide is Orotidine 5'-phosphate decarboxylase (Mycolicibacterium vanbaalenii (strain DSM 7251 / JCM 13017 / BCRC 16820 / KCTC 9966 / NRRL B-24157 / PYR-1) (Mycobacterium vanbaalenii)).